The chain runs to 425 residues: Voltage-dependent calcium channel gamma-8 subunit (425 aa).

Helical transmembrane passes span 19–39, 129–149, 158–178, and 208–228; these read VQVL…TIAI, SIFP…VAAS, IILG…IGVI, and FGGL…NIYI. Ser252 and Ser255 each carry phosphoserine. Residues 272–304 are disordered; the sequence is RRSRSSSRSSEPSPSRDASPGGPGGPGFASTDI. Low complexity predominate over residues 277–287; sequence SSRSSEPSPSR. Residues 318 to 338 traverse the membrane as a helical segment; that stretch reads VAAGLAGAGGGGGGAVGAFGG. Residues 343–354 are compositionally biased toward gly residues; sequence AGGGGGGGGGAG. 2 disordered regions span residues 343–365 and 377–425; these read AGGG…ASGF and GGGV…TTPV. Over residues 387-401 the composition is skewed to pro residues; that stretch reads PPAPPAPAPPAPSAP. Residues 412-425 show a composition bias toward polar residues; the sequence is ASNTNTLNRKTTPV.

The protein belongs to the PMP-22/EMP/MP20 family. CACNG subfamily. Interacts with CACNA1C. Identified in a complex with the L-type calcium channel subunits CACNA1C, CACNA2D1 and either CACNB1 or CACNB2. Acts as an auxiliary subunit for AMPA-selective glutamate receptors (AMPARs). Found in a complex with GRIA1, GRIA2, GRIA3, GRIA4, CNIH2, CNIH3, CACNG2, CACNG3, CACNG4, CACNG5 and CACNG7. Interacts with CNIH2. Found in a complex with GRIA1, GRIA2, GRIA3, GRIA4, DLG4 and CNIH2. Post-translationally, palmitoylated. Probably palmitoylated by ZDHHC3 and ZDHHC7. As to expression, detected in heart left ventricle.

It is found in the cell membrane. It localises to the postsynaptic density membrane. Its function is as follows. Regulates the activity of L-type calcium channels that contain CACNA1C as pore-forming subunit. Regulates the trafficking and gating properties of AMPA-selective glutamate receptors (AMPARs). Promotes their targeting to the cell membrane and synapses and modulates their gating properties by slowing their rates of activation, deactivation and desensitization and by mediating their resensitization. Does not show subunit-specific AMPA receptor regulation and regulates all AMPAR subunits. The chain is Voltage-dependent calcium channel gamma-8 subunit from Homo sapiens (Human).